Reading from the N-terminus, the 280-residue chain is Transcription factor MYB60 (280 aa).

2 HTH myb-type domains span residues 9-65 (KIGI…RPGI) and 66-116 (KRGN…KKKL). 2 consecutive DNA-binding regions (H-T-H motif) follow at residues 37 to 61 (WRSV…TNYL) and 89 to 112 (WASI…NTHL). S-nitrosocysteine is present on residues Cys-49 and Cys-53. Basic and acidic residues predominate over residues 118 to 127 (KSDSDERSRS). 2 disordered regions span residues 118 to 149 (KSDS…TYAS) and 204 to 247 (EEGH…NATP). Residues 128–149 (ENIALQTSSTRNTINHRSTYAS) are compositionally biased toward polar residues.

As to expression, specifically expressed in guard cells. Present in seedlings, leaves, stems and flowers.

The protein resides in the nucleus. Functionally, transcription factor involved in the regulation of gene (e.g. drought-regulated and flavonoid biosynthetic genes) expression and stomatal movements leading to negative regulation of responses to drought and responses to other physiological stimuli (e.g. light). Promotes guard cell deflation in response to water deficit. Triggers root growth upon osmotic stress (e.g. mannitol containing medium). This chain is Transcription factor MYB60, found in Arabidopsis thaliana (Mouse-ear cress).